Reading from the N-terminus, the 640-residue chain is Protein UL35 (640 aa).

Disordered regions lie at residues 353–373 (ERGE…PREA), 500–571 (ASSS…PRQR), and 586–640 (AYSH…LRHL). Residues 358-367 (GDEDEEQEND) show a composition bias toward acidic residues. Low complexity predominate over residues 500 to 562 (ASSSSASSSS…LSGSHGISSA (63 aa)). The span at 588-598 (SHHRRHRRRRS) shows a compositional bias: basic residues. The span at 631–640 (DDLAENLRHL) shows a compositional bias: basic and acidic residues.

Belongs to the herpesviridae pp85 family. In terms of assembly, interacts with UL82. Interacts with isoform UL35A. Interacts with host UBP7; this interaction significantly inhibits the ability of USP7 to form nuclear bodies. Interacts with host DCAF1 (via C-terminus). Interacts with host SNX5; this interaction allows proper gB localization during viral assembly. Interacts with host TBK1; this interaction prevents type I interferon production. As to quaternary structure, interacts with UL82. Interacts with isoform UL35. Interacts with host UBP7; this interaction significantly inhibits the ability of USP7 to form nuclear bodies. Interacts with host SNX5; this interaction allows proper gB localization during viral assembly.

It is found in the virion tegument. Its subcellular location is the host nucleus. It localises to the host cytoplasm. Its function is as follows. Plays important role in immediate-early gene expression through interaction with UL82. Forms nuclear bodies in host nucleus, independently of PML. In turn, UL35 nuclear bodies associate with and remodel PML bodies. Through interaction with host DCAF1, causes cells to accumulate in the G2 phase of the cell cycle by inducing a DNA damage response. Regulates viral assembly by controlling the localization of the essential gB through regulation of a retrograde transport pathway. This modulation occurs via binding and inhibition of host sorting nexin 5/SNX5. Also plays a role in the inhibition of pattern recognition receptor-mediated type I interferon signaling at the level of TBK1. In terms of biological role, promotes cytoplasmic UL82 accumulation and inhibits UL35-containing nuclear bodies formation. Regulates viral assembly by controlling the localization of the essential gB through regulation of a retrograde transport pathway. This modulation occurs via binding and inhibition of host sorting nexin 5/SNX5. This chain is Protein UL35 (UL35), found in Homo sapiens (Human).